Consider the following 308-residue polypeptide: Glutamyl-Q tRNA(Asp) synthetase (308 aa).

Residues 19 to 23 (RFAPS) and glutamate 55 contribute to the L-glutamate site. Residues 22-32 (PSPSGELHFGS) carry the 'HIGH' region motif. The Zn(2+) site is built by cysteine 111, cysteine 113, tyrosine 125, and cysteine 129. L-glutamate-binding residues include tyrosine 182 and arginine 200. Positions 238 to 242 (KLSKQ) match the 'KMSKS' region motif. Lysine 241 is a binding site for ATP.

Belongs to the class-I aminoacyl-tRNA synthetase family. GluQ subfamily. The cofactor is Zn(2+).

Its function is as follows. Catalyzes the tRNA-independent activation of glutamate in presence of ATP and the subsequent transfer of glutamate onto a tRNA(Asp). Glutamate is transferred on the 2-amino-5-(4,5-dihydroxy-2-cyclopenten-1-yl) moiety of the queuosine in the wobble position of the QUC anticodon. The polypeptide is Glutamyl-Q tRNA(Asp) synthetase (Escherichia coli O6:H1 (strain CFT073 / ATCC 700928 / UPEC)).